Consider the following 347-residue polypeptide: NADH-ubiquinone oxidoreductase chain 2 (347 aa).

Transmembrane regions (helical) follow at residues Met1–Thr21, His25–Met45, Tyr59–Val79, Ile96–Pro116, Gly127–Pro147, Ile149–Gly169, Ile178–Pro198, Thr201–Leu221, Leu240–Phe260, Asp274–Met294, and Ile326–Leu346.

The protein belongs to the complex I subunit 2 family. As to quaternary structure, core subunit of respiratory chain NADH dehydrogenase (Complex I) which is composed of 45 different subunits. Interacts with TMEM242.

The protein resides in the mitochondrion inner membrane. The catalysed reaction is a ubiquinone + NADH + 5 H(+)(in) = a ubiquinol + NAD(+) + 4 H(+)(out). Its function is as follows. Core subunit of the mitochondrial membrane respiratory chain NADH dehydrogenase (Complex I) which catalyzes electron transfer from NADH through the respiratory chain, using ubiquinone as an electron acceptor. Essential for the catalytic activity and assembly of complex I. This chain is NADH-ubiquinone oxidoreductase chain 2, found in Dobsonia minor (Lesser bare-backed fruit bat).